The sequence spans 801 residues: Squamosa promoter-binding-like protein 7 (801 aa).

Disordered regions lie at residues 1–23 and 59–91; these read MSSLSQSPPPPEMDIQPPALVND and SPPLPPLIPTQTPAESELDPSPEESGSGSDRVR. The SBP-type; atypical zinc-finger motif lies at 135–212; sequence VARCQVPDCE…ERHNNRRKRK (78 aa). Zn(2+) contacts are provided by cysteine 138, cysteine 143, cysteine 160, cysteine 163, cysteine 179, cysteine 182, histidine 186, and cysteine 198. Residues 195–211 carry the Bipartite nuclear localization signal motif; the sequence is KRSCRRKLERHNNRRKR. A compositionally biased stretch (basic residues) spans 203 to 213; the sequence is ERHNNRRKRKP. 2 disordered regions span residues 203–258 and 286–313; these read ERHN…PSLI and GSGEAQPDEGMNDTKFERSPSNGDNKSA. A compositionally biased stretch (polar residues) spans 222–233; it reads EQQQVLSQNDNS. The span at 249 to 258 shows a compositional bias: basic and acidic residues; sequence QRAEEEPSLI. Residues 304-313 are compositionally biased toward polar residues; that stretch reads SPSNGDNKSA.

Homodimer. Interacts with KIN17. Interacts with HY5. The cofactor is Zn(2+). As to expression, expressed in roots rosette leaves, cauline leaves, stems, flowers and siliques.

The protein resides in the nucleus speckle. In terms of biological role, transcription factor that participates in reprogramming global gene expression during copper deficiency in order to improve the metal uptake and prioritize its distribution to copper proteins of major importance. Binds directly to 5'-GTAC-3' motifs in the microRNA (miRNA) promoter of the stress-responsive miRNAs miR398b and miR398c to activate their transcription. During copper deficiency, activates the copper transporters COPT1 and COPT2, and the copper chaperone CCH, directly or indirectly via miRNAs. Required for the expression of the miRNAs miR397, miR408 and miR857. Acts coordinately with HY5 to regulate miR408 and its target genes in response to changes in light and copper conditions. Activates miR857 and its target genes in response to low copper conditions. Involved in cadmium stress response by regulating miR397a, miR398b, miR398c and miR857. Required for iron homeostasis during copper deficiency. The chain is Squamosa promoter-binding-like protein 7 (SPL7) from Arabidopsis thaliana (Mouse-ear cress).